A 210-amino-acid polypeptide reads, in one-letter code: MKLKFCGFTSIKDVTAASQLPIDAIGFIHYEKSKRHQTITQIKKLASAVPDHIDKVCVVVNPDLTTIEHVLSNTPINTIQLHGTESIDFIQEIKKKYSSIKITKALAADENIIQNINKYKGFVDLFIIDTPSVSYGGTGQTYDWTILKNIKDIPYLIAGGINTENIQTVNQFKLSHQGFDLASGIEVNGRKDIEKMTAIVNIVKGDRENE.

Belongs to the TrpF family.

It catalyses the reaction N-(5-phospho-beta-D-ribosyl)anthranilate = 1-(2-carboxyphenylamino)-1-deoxy-D-ribulose 5-phosphate. It participates in amino-acid biosynthesis; L-tryptophan biosynthesis; L-tryptophan from chorismate: step 3/5. This chain is N-(5'-phosphoribosyl)anthranilate isomerase, found in Staphylococcus aureus (strain MRSA252).